A 467-amino-acid chain; its full sequence is Peroxisome proliferator-activated receptor alpha (467 aa).

A DNA-binding region (nuclear receptor) is located at residues 99-173 (NIECRICGDK…VGMSHNAIRF (75 aa)). 2 consecutive NR C4-type zinc fingers follow at residues 102–122 (CRIC…CEGC) and 139–161 (CDRS…FHKC). Residues 239-466 (FVIHDMETLC…PLLQEIYRDM (228 aa)) form the NR LBD domain. The required for heterodimerization with RXRA stretch occupies residues 304–433 (DQVTLLKYGV…PKLLQKLADL (130 aa)).

Belongs to the nuclear hormone receptor family. NR1 subfamily. In terms of assembly, heterodimer; with RXRA. This heterodimerization is required for DNA binding and transactivation activity. Interacts with NCOA3 coactivator. Interacts with CITED2; the interaction stimulates its transcriptional activity. Also interacts with PPARBP in vitro. Interacts with AKAP13, LPIN1, PRDM16 and coactivator NCOA6. Interacts with ASXL1 and ASXL2. Interacts with PER2. Interacts with SIRT1; the interaction seems to be modulated by NAD(+) levels. Interacts with CRY1 and CRY2. In hepatocytes, interacts with PAQR3 and HUWE1; the interactions promote PPARA poylubiquitination and HUWE1-mediated degradation. Post-translationally, ubiquitinated by E3 ubiquitin-protein ligase HUWE1; leading to proteasomal degradation. In terms of processing, phosphorylated.

It localises to the nucleus. Ligand-activated transcription factor. Key regulator of lipid metabolism. Activated by the endogenous ligand 1-palmitoyl-2-oleoyl-sn-glycerol-3-phosphocholine (16:0/18:1-GPC). Activated by oleylethanolamide, a naturally occurring lipid that regulates satiety. Receptor for peroxisome proliferators such as hypolipidemic drugs and fatty acids. Regulates the peroxisomal beta-oxidation pathway of fatty acids. Functions as a transcription activator for the ACOX1 and P450 genes. Transactivation activity requires heterodimerization with RXRA and is antagonized by NR2C2. May be required for the propagation of clock information to metabolic pathways regulated by PER2. This chain is Peroxisome proliferator-activated receptor alpha (PPARA), found in Cavia porcellus (Guinea pig).